The primary structure comprises 186 residues: Small ribosomal subunit protein uS7 (186 aa).

It belongs to the universal ribosomal protein uS7 family. In terms of assembly, part of the 30S ribosomal subunit.

In terms of biological role, one of the primary rRNA binding proteins, it binds directly to 16S rRNA where it nucleates assembly of the head domain of the 30S subunit. Is located at the subunit interface close to the decoding center. This is Small ribosomal subunit protein uS7 from Methanococcoides burtonii (strain DSM 6242 / NBRC 107633 / OCM 468 / ACE-M).